Reading from the N-terminus, the 83-residue chain is Neurotoxin LmNaTx10 (83 aa).

A signal peptide spans 1-19 (MNFLIFIAVASSLALGALC). The 60-residue stretch at 21–80 (KEGYPYDGNNCRYICFRNQYCDDLCKKLKGESGYCYGWNQSCYCYGLPDTEKTKPDKRCH) folds into the LCN-type CS-alpha/beta domain. 4 cysteine pairs are disulfide-bonded: Cys-31-Cys-79, Cys-35-Cys-55, Cys-41-Cys-62, and Cys-45-Cys-64.

It belongs to the long (4 C-C) scorpion toxin superfamily. Sodium channel inhibitor family. Alpha subfamily. Expressed by the venom gland.

Its subcellular location is the secreted. In terms of biological role, binds voltage-independently at site-3 of voltage-gated sodium channels (Nav) and inhibits the inactivation of the activated channels, thereby blocking neuronal transmission. In Lychas mucronatus (Chinese swimming scorpion), this protein is Neurotoxin LmNaTx10.